The primary structure comprises 259 residues: Thiazole synthase (259 aa).

The active-site Schiff-base intermediate with DXP is Lys-99. 1-deoxy-D-xylulose 5-phosphate is bound by residues Gly-161, 187 to 188, and 209 to 210; these read AG and NT.

The protein belongs to the ThiG family. As to quaternary structure, homotetramer. Forms heterodimers with either ThiH or ThiS.

The protein resides in the cytoplasm. The enzyme catalyses [ThiS sulfur-carrier protein]-C-terminal-Gly-aminoethanethioate + 2-iminoacetate + 1-deoxy-D-xylulose 5-phosphate = [ThiS sulfur-carrier protein]-C-terminal Gly-Gly + 2-[(2R,5Z)-2-carboxy-4-methylthiazol-5(2H)-ylidene]ethyl phosphate + 2 H2O + H(+). It participates in cofactor biosynthesis; thiamine diphosphate biosynthesis. Catalyzes the rearrangement of 1-deoxy-D-xylulose 5-phosphate (DXP) to produce the thiazole phosphate moiety of thiamine. Sulfur is provided by the thiocarboxylate moiety of the carrier protein ThiS. In vitro, sulfur can be provided by H(2)S. In Nitratiruptor sp. (strain SB155-2), this protein is Thiazole synthase.